Consider the following 415-residue polypeptide: Squalene synthase clz20 (415 aa).

The N-linked (GlcNAc...) asparagine glycan is linked to Asn114. Residues 395–415 form a helical membrane-spanning segment; sequence ADTMYLAVLVLGVFGVVAAIL.

The protein belongs to the phytoene/squalene synthase family. It depends on Mg(2+) as a cofactor.

It localises to the membrane. The enzyme catalyses 2 (2E,6E)-farnesyl diphosphate + NADH + H(+) = squalene + 2 diphosphate + NAD(+). The catalysed reaction is 2 (2E,6E)-farnesyl diphosphate + NADPH + H(+) = squalene + 2 diphosphate + NADP(+). It participates in terpene metabolism; lanosterol biosynthesis; lanosterol from farnesyl diphosphate: step 1/3. Its function is as follows. Squalene synthase; part of the gene cluster that mediates the biosynthesis of squalestatin S1 (SQS1, also known as zaragozic acid A), a heavily oxidized fungal polyketide that offers potent cholesterol lowering activity by targeting squalene synthase (SS). Catalyzes the condensation of 2 two farnesyl pyrophosphate moieties to form squalene. The presence of a gene encoding a squalene synthase supports the identification of the cluster as being responsible for SQS1 production and suggests a likely mechanism for self-resistance. This is Squalene synthase clz20 from Cochliobolus lunatus (Filamentous fungus).